We begin with the raw amino-acid sequence, 354 residues long: Protein RecA (354 aa).

Position 67–74 (G67–T74) interacts with ATP.

Belongs to the RecA family.

Its subcellular location is the cytoplasm. Its function is as follows. Can catalyze the hydrolysis of ATP in the presence of single-stranded DNA, the ATP-dependent uptake of single-stranded DNA by duplex DNA, and the ATP-dependent hybridization of homologous single-stranded DNAs. It interacts with LexA causing its activation and leading to its autocatalytic cleavage. This is Protein RecA from Pasteurella multocida (strain Pm70).